The following is a 349-amino-acid chain: Peroxidase 7 (349 aa).

An N-terminal signal peptide occupies residues 1 to 22 (MKLAVVSVVVILGVLVAWPVSA). Intrachain disulfides connect Cys60/Cys136, Cys93/Cys98, Cys142/Cys341, and Cys220/Cys252. The active-site Proton acceptor is the His91. Ca(2+) is bound by residues Asp92, Val95, Gly97, Asp99, and Ser101. A substrate-binding site is contributed by Pro183. His213 is a heme b binding site. Thr214 lines the Ca(2+) pocket. An N-linked (GlcNAc...) asparagine glycan is attached at Asn231. Ca(2+)-binding residues include Asp262, Thr265, and Asp270.

It belongs to the peroxidase family. Classical plant (class III) peroxidase subfamily. Heme b is required as a cofactor. The cofactor is Ca(2+).

It is found in the secreted. It carries out the reaction 2 a phenolic donor + H2O2 = 2 a phenolic radical donor + 2 H2O. Its function is as follows. Removal of H(2)O(2), oxidation of toxic reductants, biosynthesis and degradation of lignin, suberization, auxin catabolism, response to environmental stresses such as wounding, pathogen attack and oxidative stress. These functions might be dependent on each isozyme/isoform in each plant tissue. This is Peroxidase 7 (PER7) from Arabidopsis thaliana (Mouse-ear cress).